Consider the following 192-residue polypeptide: Ribosomal RNA large subunit methyltransferase E (192 aa).

S-adenosyl-L-methionine is bound by residues Gly46, Trp48, Asp63, Asp79, and Asp102. Lys142 functions as the Proton acceptor in the catalytic mechanism.

It belongs to the class I-like SAM-binding methyltransferase superfamily. RNA methyltransferase RlmE family.

Its subcellular location is the cytoplasm. The catalysed reaction is uridine(2552) in 23S rRNA + S-adenosyl-L-methionine = 2'-O-methyluridine(2552) in 23S rRNA + S-adenosyl-L-homocysteine + H(+). Its function is as follows. Specifically methylates the uridine in position 2552 of 23S rRNA at the 2'-O position of the ribose in the fully assembled 50S ribosomal subunit. This is Ribosomal RNA large subunit methyltransferase E from Wolbachia pipientis wMel.